The following is a 565-amino-acid chain: MRCLQNSAKTLPLAFKSALLPLSQRWFCKFSPKPSSLTNIFKVSISTMANTLNGNVIMTSKPQSTYQVVVAATKEMGIGKDGKLPWNLPTDLKFFKDLTLSTSDSAKKNAVVMGRKTWESIPKKYRPLSGRLNVVLSRSSGFDIANTENVVTCSSIDSALDLLAAPPFSLSIEKVFVIGGGDILREALNKPSCEAIHITEIDTSIDCDTFIPTVDTSAYQPWCSSFPICENGLRFSFTTHVRVKSSSAGEASDESDGSKVLQVDWKKFSSVLPKMIFDRHEEYLYLNLVKEIISNGNLKDDRTGTGTLSKFGCQMKFNLRRNFPLLTTKRVFWRGVVEELLWFISGSTNAKVLQEKGIRIWDGNASRAYLDGIGLTEREEGDLGPVYGFQWRHFGAKYTDMHADYTGQGFDQLLDVINKIKNNPDDRRIIMSAWNPSDLKLMALPPCHMFAQFYVANGELSCQMYQRSADMGLGVPFNIASYSLLTCILAHVCDLVPGDFIHVIGDAHVYKNHVRPLQEQLENPPKPFPVLKINPEKKDIDSFVADDFELIGYDPHKKIDMKMAV.

Residues 65–242 form the DHFR domain; that stretch reads TYQVVVAATK…LRFSFTTHVR (178 aa). Residue Val-69 participates in substrate binding. NADP(+) contacts are provided by residues Ala-71 and 77 to 83; that span reads GIGKDGK. Asp-91 serves as a coordination point for substrate. NADP(+) is bound by residues 115-117 and 136-139; these read RKT and LSRS. Ile-178 provides a ligand contact to substrate. NADP(+) is bound at residue 179-186; it reads GGGDILRE. Thr-199 is a substrate binding site. The interval 245–280 is hinge; sequence SSSAGEASDESDGSKVLQVDWKKFSSVLPKMIFDRH. A thymidylate synthase region spans residues 281–565; it reads EEYLYLNLVK…HKKIDMKMAV (285 aa). Arg-302 contributes to the dUMP binding site. The active site involves Cys-447. DUMP contacts are provided by residues His-448, 466-470, Asn-478, and 508-510; these read QRSAD and HVY.

It in the N-terminal section; belongs to the dihydrofolate reductase family. In the C-terminal section; belongs to the thymidylate synthase family. In terms of assembly, heterodimer or homodimer.

The enzyme catalyses (6S)-5,6,7,8-tetrahydrofolate + NADP(+) = 7,8-dihydrofolate + NADPH + H(+). It catalyses the reaction dUMP + (6R)-5,10-methylene-5,6,7,8-tetrahydrofolate = 7,8-dihydrofolate + dTMP. It participates in cofactor biosynthesis; tetrahydrofolate biosynthesis; 5,6,7,8-tetrahydrofolate from 7,8-dihydrofolate: step 1/1. In terms of biological role, bifunctional enzyme. Involved in de novo dTMP biosynthesis. Key enzyme in folate metabolism. Can play two different roles depending on the source of dihydrofolate: de novo synthesis of tetrahydrofolate or recycling of the dihydrofolate released as one of the end products of the TS catalyzed reaction. Catalyzes an essential reaction for de novo glycine and purine synthesis, DNA precursor synthesis, and for the conversion of dUMP to dTMP. This chain is Bifunctional dihydrofolate reductase-thymidylate synthase 2 (THY-2), found in Arabidopsis thaliana (Mouse-ear cress).